A 196-amino-acid chain; its full sequence is Peptidyl-tRNA hydrolase (196 aa).

Y14 is a binding site for tRNA. The active-site Proton acceptor is the H19. Residues F64, N66, and N112 each coordinate tRNA.

Belongs to the PTH family. In terms of assembly, monomer.

It is found in the cytoplasm. It carries out the reaction an N-acyl-L-alpha-aminoacyl-tRNA + H2O = an N-acyl-L-amino acid + a tRNA + H(+). In terms of biological role, hydrolyzes ribosome-free peptidyl-tRNAs (with 1 or more amino acids incorporated), which drop off the ribosome during protein synthesis, or as a result of ribosome stalling. Its function is as follows. Catalyzes the release of premature peptidyl moieties from peptidyl-tRNA molecules trapped in stalled 50S ribosomal subunits, and thus maintains levels of free tRNAs and 50S ribosomes. This chain is Peptidyl-tRNA hydrolase, found in Solibacter usitatus (strain Ellin6076).